Reading from the N-terminus, the 137-residue chain is DNA-binding protein H-NS (137 aa).

The DNA-binding element occupies 112–117 (QGRTPA).

The protein belongs to the histone-like protein H-NS family. Homodimer that oligomerizes on DNA into higher-order complexes that form bridges between disparate regions of DNA compacting it. Interacts with Hha, Cnu and StpA.

The protein localises to the cytoplasm. It is found in the nucleoid. In terms of biological role, a DNA-binding protein implicated in transcriptional repression and chromosome organization and compaction. Binds nucleation sites in AT-rich DNA and bridges them, forming higher-order nucleoprotein complexes and condensing the chromosome. As many horizontally transferred genes are AT-rich, it plays a central role in silencing foreign genes. A subset of genes are repressed by H-NS in association with other proteins. In Escherichia coli O6:H1 (strain CFT073 / ATCC 700928 / UPEC), this protein is DNA-binding protein H-NS (hns).